We begin with the raw amino-acid sequence, 352 residues long: Guanine nucleotide-binding protein alpha-7 subunit (352 aa).

G2 carries the N-myristoyl glycine lipid modification. C4 carries the S-palmitoyl cysteine lipid modification. The G-alpha domain maps to 32-352 (RIIKLLLLGA…AKNLKSMGLC (321 aa)). The segment at 35–48 (KLLLLGAGESGKST) is G1 motif. GTP-binding positions include 40-47 (GAGESGKS), 174-180 (LRTRIKT), 199-203 (DVGGQ), 268-271 (NKKD), and A324. 2 residues coordinate Mg(2+): S47 and T180. A G2 motif region spans residues 172-180 (DLLRTRIKT). The tract at residues 195 to 204 (FRVIDVGGQR) is G3 motif. Residues 264 to 271 (ILFLNKKD) form a G4 motif region. The tract at residues 322–327 (TCATDT) is G5 motif.

Belongs to the G-alpha family. G(i/o/t/z) subfamily. G proteins are composed of 3 units; alpha, beta and gamma. The alpha chain contains the guanine nucleotide binding site.

Functionally, guanine nucleotide-binding proteins (G proteins) are involved as modulators or transducers in various transmembrane signaling systems. The chain is Guanine nucleotide-binding protein alpha-7 subunit (gpa-7) from Caenorhabditis briggsae.